The sequence spans 130 residues: Protein ApaG (130 aa).

The 125-residue stretch at 3–127 (SAVTQDIQIT…FSLDSPFVRR (125 aa)) folds into the ApaG domain.

The polypeptide is Protein ApaG (Methylocella silvestris (strain DSM 15510 / CIP 108128 / LMG 27833 / NCIMB 13906 / BL2)).